Here is a 313-residue protein sequence, read N- to C-terminus: MEKRKIILDCDPGHDDAIAMMMAAKHPAIDLLGITIVAGNQTLDKTLINGLNVCQKLEINVPVYAGMPQPIMRKQIVADNIHGETGLDGPVFEPLTRQAESTHAVKYIIDTLMASDGDITLVPVGPLSNIAVAMRMQPAILPKIREIVLMGGAYGTGNFTPSAEFNIFADPEAARVVFTSGVPLVMMGLDLTNQTVCTPDVIARMERAGGPAGELFSDIMNFTLKTQFENYGLAGGPVHDATCIGYLINPDGIKTQEMYVEVDVNSGPCYGRTVCDELGVLGKPANTKVGITIDTDWFWGLVEECVRGYIKTH.

Catalysis depends on aspartate 11, which acts as the Proton acceptor. Residues aspartate 11, aspartate 16, and valine 124 each contribute to the Ca(2+) site. Residues glutamine 227 and histidine 239 each contribute to the substrate site. Aspartate 240 contributes to the Ca(2+) binding site.

Belongs to the IUNH family. RihB subfamily. Homotetramer. It depends on Ca(2+) as a cofactor.

It carries out the reaction a pyrimidine ribonucleoside + H2O = a pyrimidine nucleobase + D-ribose. Hydrolyzes cytidine or uridine to ribose and cytosine or uracil, respectively. Has a clear preference for cytidine over uridine. Strictly specific for ribonucleosides. In Escherichia coli O9:H4 (strain HS), this protein is Pyrimidine-specific ribonucleoside hydrolase RihB.